Reading from the N-terminus, the 323-residue chain is NADH-ubiquinone oxidoreductase chain 1 (323 aa).

Transmembrane regions (helical) follow at residues 8–28, 74–94, 105–125, 150–170, 176–196, 227–247, 258–278, and 298–318; these read LLNPLAVIIPILLAVAFLTLI, LLFITTPMLALTMALTLWLPL, LGMLFILAISSLTVYSILGSG, SLGLILLAMIIFAGGFTLTTF, TIWLLTPGWPLAAMWYISTLA, LFFLAEYANILLMNTLSTILF, ELTSINLMIKASALSMLFLWV, and FLPITLAMILWHTSLPIFTGS.

Belongs to the complex I subunit 1 family.

Its subcellular location is the mitochondrion inner membrane. It carries out the reaction a ubiquinone + NADH + 5 H(+)(in) = a ubiquinol + NAD(+) + 4 H(+)(out). Core subunit of the mitochondrial membrane respiratory chain NADH dehydrogenase (Complex I) that is believed to belong to the minimal assembly required for catalysis. Complex I functions in the transfer of electrons from NADH to the respiratory chain. The immediate electron acceptor for the enzyme is believed to be ubiquinone. This is NADH-ubiquinone oxidoreductase chain 1 (MT-ND1) from Latimeria chalumnae (Coelacanth).